The sequence spans 235 residues: Protein MAINTENANCE OF PSII UNDER HIGH LIGHT 1 (235 aa).

A helical membrane pass occupies residues 127-147 (TAAIVAGIALIAVAAASSILL). Positions 181-235 (QPSTPSVTEAPPVAELETSLPETPSVAQQETSLPETMASEAQPEASSVPTTSSTS) are disordered. Composition is skewed to polar residues over residues 200–214 (LPET…TSLP) and 224–235 (EASSVPTTSSTS).

As to quaternary structure, interacts with psbA, psbB, psbC and psbD.

The protein localises to the plastid. Its subcellular location is the chloroplast thylakoid membrane. In terms of biological role, interacts with photosystem II (PSII) core complexes and participates in the maintenance of normal PSII activity under photoinhibitory stress. May protect against photodamage or stabilize PSII under high-light stress. Participates in the maintainance of proper PSII function under high-light stress by protecting PSII from photooxidative damage. The sequence is that of Protein MAINTENANCE OF PSII UNDER HIGH LIGHT 1 from Arabidopsis thaliana (Mouse-ear cress).